We begin with the raw amino-acid sequence, 244 residues long: Cobalt transport protein CbiM (244 aa).

The signal sequence occupies residues 1-20 (MRKITFIAALLSLLPRYALA). Helical transmembrane passes span 31 to 51 (KWCL…LIYI), 63 to 83 (ILLG…LPSV), 95 to 115 (LGAI…VLLF), 117 to 137 (ALLL…SMAV), 161 to 181 (VFLG…LQLA), and 201 to 221 (IFAV…VIVL).

The protein belongs to the CbiM family. Forms an energy-coupling factor (ECF) transporter complex composed of an ATP-binding protein (A component, CbiO), a transmembrane protein (T component, CbiQ) and 2 possible substrate-capture proteins (S components, CbiM and CbiN) of unknown stoichimetry.

The protein resides in the cell membrane. The protein operates within cofactor biosynthesis; adenosylcobalamin biosynthesis. Part of the energy-coupling factor (ECF) transporter complex CbiMNOQ involved in cobalt import. This is Cobalt transport protein CbiM from Thermosediminibacter oceani (strain ATCC BAA-1034 / DSM 16646 / JW/IW-1228P).